Reading from the N-terminus, the 312-residue chain is tRNA-cytidine(32) 2-sulfurtransferase (312 aa).

The PP-loop motif signature appears at 47-52 (SGGKDS). [4Fe-4S] cluster contacts are provided by Cys-122, Cys-125, and Cys-213.

It belongs to the TtcA family. In terms of assembly, homodimer. The cofactor is Mg(2+). Requires [4Fe-4S] cluster as cofactor.

It localises to the cytoplasm. The enzyme catalyses cytidine(32) in tRNA + S-sulfanyl-L-cysteinyl-[cysteine desulfurase] + AH2 + ATP = 2-thiocytidine(32) in tRNA + L-cysteinyl-[cysteine desulfurase] + A + AMP + diphosphate + H(+). Its pathway is tRNA modification. In terms of biological role, catalyzes the ATP-dependent 2-thiolation of cytidine in position 32 of tRNA, to form 2-thiocytidine (s(2)C32). The sulfur atoms are provided by the cysteine/cysteine desulfurase (IscS) system. The sequence is that of tRNA-cytidine(32) 2-sulfurtransferase from Shewanella frigidimarina (strain NCIMB 400).